The sequence spans 361 residues: Mannose-1-phosphate guanylyltransferase 1 (361 aa).

GDP-alpha-D-mannose is bound by residues leucine 6 and valine 7. Glycine 9, glycine 11, threonine 12, arginine 13, and lysine 23 together coordinate diphosphate. GDP-alpha-D-mannose contacts are provided by glycine 85, asparagine 109, aspartate 111, glycine 146, and asparagine 173.

Belongs to the transferase hexapeptide repeat family. In terms of assembly, interacts in vitro with CSN5A and CSN5B, but in planta only with CSN5B, which targets CYT1 for degradation in the dark by the 26S proteasome. Forms homodimers in the unliganded structure. The product-bound structure is composed of six dimers that form a dodecameric assembly.

It is found in the cytoplasm. The protein localises to the nucleus. The catalysed reaction is alpha-D-mannose 1-phosphate + GTP + H(+) = GDP-alpha-D-mannose + diphosphate. It functions in the pathway nucleotide-sugar biosynthesis; GDP-alpha-D-mannose biosynthesis; GDP-alpha-D-mannose from alpha-D-mannose 1-phosphate (GTP route): step 1/1. Its function is as follows. Essential protein during embryogenesis. Catalyzes a reaction of the Smirnoff-Wheeler pathway, the major route to ascorbate biosynthesis in plants. Plays an essential role in plant growth and development and cell-wall architecture. Provides GDP-mannose, used for cell wall carbohydrate biosynthesis, protein N-glycosylation, as well as for the biosynthesis of the antioxidant ascorbate. The polypeptide is Mannose-1-phosphate guanylyltransferase 1 (Arabidopsis thaliana (Mouse-ear cress)).